A 235-amino-acid polypeptide reads, in one-letter code: Uracil-DNA glycosylase (235 aa).

Aspartate 71 serves as the catalytic Proton acceptor.

The protein belongs to the uracil-DNA glycosylase (UDG) superfamily. UNG family.

Its subcellular location is the cytoplasm. It catalyses the reaction Hydrolyzes single-stranded DNA or mismatched double-stranded DNA and polynucleotides, releasing free uracil.. In terms of biological role, excises uracil residues from the DNA which can arise as a result of misincorporation of dUMP residues by DNA polymerase or due to deamination of cytosine. The chain is Uracil-DNA glycosylase from Helicobacter hepaticus (strain ATCC 51449 / 3B1).